Here is a 155-residue protein sequence, read N- to C-terminus: MADLSALKDIATTAEPAAPVHVKKVDAQGRSYATGKRKDAVARVWIKPGSGKITVNGKPFSDYFARPVLQMILQQPVVAAARDGQFDIDATVAGGGLSGQAGAVRHGISKALTYFEPGLRAVLKRGGFLTRDSRVVERKKYGRAKARRSFQFSKR.

The protein belongs to the universal ribosomal protein uS9 family.

In Sinorhizobium medicae (strain WSM419) (Ensifer medicae), this protein is Small ribosomal subunit protein uS9.